The chain runs to 185 residues: Lysozyme g (185 aa).

2 disulfides stabilise this stretch: Cys-4–Cys-60 and Cys-18–Cys-29. The active site involves Glu-73.

This sequence belongs to the glycosyl hydrolase 23 family.

It localises to the secreted. It catalyses the reaction Hydrolysis of (1-&gt;4)-beta-linkages between N-acetylmuramic acid and N-acetyl-D-glucosamine residues in a peptidoglycan and between N-acetyl-D-glucosamine residues in chitodextrins.. The polypeptide is Lysozyme g (Cygnus atratus (Black swan)).